Reading from the N-terminus, the 355-residue chain is UDP-3-O-acylglucosamine N-acyltransferase (355 aa).

Histidine 248 acts as the Proton acceptor in catalysis.

It belongs to the transferase hexapeptide repeat family. LpxD subfamily. As to quaternary structure, homotrimer.

It carries out the reaction a UDP-3-O-[(3R)-3-hydroxyacyl]-alpha-D-glucosamine + a (3R)-hydroxyacyl-[ACP] = a UDP-2-N,3-O-bis[(3R)-3-hydroxyacyl]-alpha-D-glucosamine + holo-[ACP] + H(+). It participates in bacterial outer membrane biogenesis; LPS lipid A biosynthesis. In terms of biological role, catalyzes the N-acylation of UDP-3-O-acylglucosamine using 3-hydroxyacyl-ACP as the acyl donor. Is involved in the biosynthesis of lipid A, a phosphorylated glycolipid that anchors the lipopolysaccharide to the outer membrane of the cell. The protein is UDP-3-O-acylglucosamine N-acyltransferase of Synechococcus elongatus (strain ATCC 33912 / PCC 7942 / FACHB-805) (Anacystis nidulans R2).